The following is a 173-amino-acid chain: Ribulose bisphosphate carboxylase small subunit, chloroplastic 7 (173 aa).

Residues 1 to 49 (MASIPATVATVAQANMVAPFTGLKSNAAFPVTKKVNDFSTLASNGGRVQ) constitute a chloroplast transit peptide.

The protein belongs to the RuBisCO small chain family. As to quaternary structure, heterohexadecamer of 8 large and 8 small subunits.

It is found in the plastid. The protein resides in the chloroplast. Its function is as follows. RuBisCO catalyzes two reactions: the carboxylation of D-ribulose 1,5-bisphosphate, the primary event in carbon dioxide fixation, as well as the oxidative fragmentation of the pentose substrate. Both reactions occur simultaneously and in competition at the same active site. Although the small subunit is not catalytic it is essential for maximal activity. This is Ribulose bisphosphate carboxylase small subunit, chloroplastic 7 from Flaveria pringlei.